A 342-amino-acid chain; its full sequence is Ribosomal RNA small subunit methyltransferase C (342 aa).

It belongs to the methyltransferase superfamily. RsmC family. In terms of assembly, monomer.

The protein resides in the cytoplasm. It carries out the reaction guanosine(1207) in 16S rRNA + S-adenosyl-L-methionine = N(2)-methylguanosine(1207) in 16S rRNA + S-adenosyl-L-homocysteine + H(+). Functionally, specifically methylates the guanine in position 1207 of 16S rRNA in the 30S particle. The chain is Ribosomal RNA small subunit methyltransferase C from Salmonella paratyphi A (strain ATCC 9150 / SARB42).